The following is a 430-amino-acid chain: DNA repair protein recA homolog 3, mitochondrial (430 aa).

The N-terminal 35 residues, 1 to 35 (MARILRNVYSLRSSLFSSELLRRSVVGTSFQLRGF), are a transit peptide targeting the mitochondrion. 119-126 (GPEASGKT) contacts ATP. The tract at residues 385–415 (DEAADKETESESEEEDSLRVVVSPDNTDDES) is disordered.

It belongs to the RecA family.

The protein resides in the mitochondrion. Its function is as follows. Involved in recombination ability and DNA strand transfer activity. The chain is DNA repair protein recA homolog 3, mitochondrial from Arabidopsis thaliana (Mouse-ear cress).